Consider the following 270-residue polypeptide: MAIKLIAIDMDGTLLLPDHTISPAVKNAIAAARARGVNVVLTTGRPYAGVHNYLKELHMEQPGDYCITYNGALVQKAADGSTVAQTALSYDDYRFLEKLSREVGSHFHALDRTTLYTANRDISYYTVHESFVATIPLVFCEAEKMDPNTQFLKVMMIDEPAILDQAIARIPQEVKEKYTVLKSAPYFLEILDKRVNKGTGVKSLADVLGIKPEEIMAIGDQENDIAMIEYAGVGVAMDNAIPSVKEVANFVTKSNLEDGVAFAIEKYVLN.

The active-site Nucleophile is Asp9. Residue Asp9 participates in Mg(2+) binding. Met10 contacts phosphate. Residue Asp11 coordinates Mg(2+). Residues 43 to 44 (TG) and Lys197 each bind phosphate. Position 220 (Asp220) interacts with Mg(2+). Position 223 (Asn223) interacts with phosphate.

This sequence belongs to the HAD-like hydrolase superfamily. Cof family. As to quaternary structure, homodimer. It depends on Mg(2+) as a cofactor.

It catalyses the reaction sugar phosphate + H2O = sugar + phosphate.. In terms of biological role, catalyzes the dephosphorylation of different sugar phosphates. This Escherichia coli O6:H1 (strain CFT073 / ATCC 700928 / UPEC) protein is Sugar phosphatase YidA (yidA).